Reading from the N-terminus, the 235-residue chain is Probable inactive serine protease 37 (235 aa).

Residues 1–19 (MKFTFCLTVLAGTFFSAHS) form the signal peptide. Positions 20–233 (SVQKDDPSPY…YVSWIESTTK (214 aa)) constitute a Peptidase S1 domain. 3 cysteine pairs are disulfide-bonded: C40–C56, C131–C198, and C163–C177.

The protein belongs to the peptidase S1 family.

It is found in the cytoplasmic vesicle. The protein localises to the secretory vesicle. It localises to the acrosome. The protein resides in the secreted. Its function is as follows. Plays a role in male fertility. May have a role in sperm migration or binding to zona-intact eggs. Involved in the activation of the proacrosin/acrosin system. This chain is Probable inactive serine protease 37, found in Bos taurus (Bovine).